Consider the following 500-residue polypeptide: Lysine--tRNA ligase (500 aa).

Mg(2+) is bound by residues Glu-410 and Glu-417.

It belongs to the class-II aminoacyl-tRNA synthetase family. Homodimer. The cofactor is Mg(2+).

The protein resides in the cytoplasm. The catalysed reaction is tRNA(Lys) + L-lysine + ATP = L-lysyl-tRNA(Lys) + AMP + diphosphate. The sequence is that of Lysine--tRNA ligase from Mycoplasma mycoides subsp. mycoides SC (strain CCUG 32753 / NCTC 10114 / PG1).